Reading from the N-terminus, the 1370-residue chain is Major capsid protein (1370 aa).

This sequence belongs to the herpesviridae major capsid protein family. As to quaternary structure, homomultimer. Makes the hexons and eleven out of twelve pentons. Interacts with triplex proteins 1/TRX1 and 2/TRX2; adjacent capsomers are linked together in groups of three by triplexes, heterotrimeric complexes composed of one molecule of TRX1 and two molecules of TRX2. Interacts with scaffold protein; this interaction allows efficient MCP transport to the host nucleus. Interacts with capsid vertex component 2/CVC2. Interacts with the small capsomere-interacting protein/SCP.

Its subcellular location is the virion. The protein resides in the host nucleus. Self-assembles to form an icosahedral capsid with a T=16 symmetry, about 200 nm in diameter, and consisting of 150 hexons and 12 pentons (total of 162 capsomers). Hexons form the edges and faces of the capsid and are each composed of six MCP molecules. In contrast, one penton is found at each of the 12 vertices. Eleven of the pentons are MCP pentamers, while the last vertex is occupied by the portal complex. The capsid is surrounded by a layer of proteinaceous material designated the tegument which, in turn, is enclosed in an envelope of host cell-derived lipids containing virus-encoded glycoproteins. This is Major capsid protein from Human cytomegalovirus (strain AD169) (HHV-5).